A 257-amino-acid chain; its full sequence is Triosephosphate isomerase (257 aa).

Asn11 and Lys13 together coordinate substrate. Catalysis depends on His96, which acts as the Electrophile. The active-site Proton acceptor is Glu170.

Belongs to the triosephosphate isomerase family. As to quaternary structure, homodimer.

It catalyses the reaction D-glyceraldehyde 3-phosphate = dihydroxyacetone phosphate. Its pathway is carbohydrate biosynthesis; gluconeogenesis. It functions in the pathway carbohydrate degradation; glycolysis; D-glyceraldehyde 3-phosphate from glycerone phosphate: step 1/1. This is Triosephosphate isomerase from Giardia intestinalis (Giardia lamblia).